The chain runs to 418 residues: Glutamyl-tRNA reductase (418 aa).

Substrate contacts are provided by residues 51-54, serine 107, 112-114, and glutamine 118; these read TCNR and EPQ. Catalysis depends on cysteine 52, which acts as the Nucleophile. 187–192 contributes to the NADP(+) binding site; the sequence is GAGETA.

The protein belongs to the glutamyl-tRNA reductase family. As to quaternary structure, homodimer.

The catalysed reaction is (S)-4-amino-5-oxopentanoate + tRNA(Glu) + NADP(+) = L-glutamyl-tRNA(Glu) + NADPH + H(+). Its pathway is porphyrin-containing compound metabolism; protoporphyrin-IX biosynthesis; 5-aminolevulinate from L-glutamyl-tRNA(Glu): step 1/2. Catalyzes the NADPH-dependent reduction of glutamyl-tRNA(Glu) to glutamate 1-semialdehyde (GSA). This Dichelobacter nodosus (strain VCS1703A) protein is Glutamyl-tRNA reductase.